A 262-amino-acid chain; its full sequence is 3-methyl-2-oxobutanoate hydroxymethyltransferase (262 aa).

The Mg(2+) site is built by Asp-43 and Asp-82. 3-methyl-2-oxobutanoate is bound by residues 43-44 (DS), Asp-82, and Lys-110. Residue Glu-112 participates in Mg(2+) binding. Glu-179 functions as the Proton acceptor in the catalytic mechanism.

It belongs to the PanB family. Homodecamer; pentamer of dimers. Mg(2+) serves as cofactor.

The protein resides in the cytoplasm. The catalysed reaction is 3-methyl-2-oxobutanoate + (6R)-5,10-methylene-5,6,7,8-tetrahydrofolate + H2O = 2-dehydropantoate + (6S)-5,6,7,8-tetrahydrofolate. The protein operates within cofactor biosynthesis; (R)-pantothenate biosynthesis; (R)-pantoate from 3-methyl-2-oxobutanoate: step 1/2. Catalyzes the reversible reaction in which hydroxymethyl group from 5,10-methylenetetrahydrofolate is transferred onto alpha-ketoisovalerate to form ketopantoate. The polypeptide is 3-methyl-2-oxobutanoate hydroxymethyltransferase (Sodalis glossinidius (strain morsitans)).